Consider the following 96-residue polypeptide: Cell division protein FtsB (96 aa).

Residues 1–11 (MDIKSNSFFYI) lie on the Cytoplasmic side of the membrane. A helical transmembrane segment spans residues 12–29 (FISVVLLLIAILQYDLWF). Residues 30-96 (SNTGFIKYQA…KQGEVFYSVK (67 aa)) are Periplasmic-facing.

Belongs to the FtsB family. As to quaternary structure, part of a complex composed of FtsB, FtsL and FtsQ.

The protein resides in the cell inner membrane. Functionally, essential cell division protein. May link together the upstream cell division proteins, which are predominantly cytoplasmic, with the downstream cell division proteins, which are predominantly periplasmic. This is Cell division protein FtsB from Francisella tularensis subsp. tularensis (strain SCHU S4 / Schu 4).